We begin with the raw amino-acid sequence, 352 residues long: Protein RecA (352 aa).

Position 67–74 (67–74 (GPESSGKT)) interacts with ATP.

The protein belongs to the RecA family.

It localises to the cytoplasm. Can catalyze the hydrolysis of ATP in the presence of single-stranded DNA, the ATP-dependent uptake of single-stranded DNA by duplex DNA, and the ATP-dependent hybridization of homologous single-stranded DNAs. It interacts with LexA causing its activation and leading to its autocatalytic cleavage. The sequence is that of Protein RecA from Aggregatibacter actinomycetemcomitans (Actinobacillus actinomycetemcomitans).